The sequence spans 106 residues: Small ribosomal subunit protein uS10 (106 aa).

This sequence belongs to the universal ribosomal protein uS10 family. In terms of assembly, part of the 30S ribosomal subunit.

Involved in the binding of tRNA to the ribosomes. In Solibacter usitatus (strain Ellin6076), this protein is Small ribosomal subunit protein uS10.